Here is a 120-residue protein sequence, read N- to C-terminus: Large ribosomal subunit protein uL18 (120 aa).

The protein belongs to the universal ribosomal protein uL18 family. In terms of assembly, part of the 50S ribosomal subunit; part of the 5S rRNA/L5/L18/L25 subcomplex. Contacts the 5S and 23S rRNAs.

Functionally, this is one of the proteins that bind and probably mediate the attachment of the 5S RNA into the large ribosomal subunit, where it forms part of the central protuberance. The sequence is that of Large ribosomal subunit protein uL18 from Geobacillus sp. (strain WCH70).